Reading from the N-terminus, the 236-residue chain is Leucyl/phenylalanyl-tRNA--protein transferase (236 aa).

It belongs to the L/F-transferase family.

It localises to the cytoplasm. It catalyses the reaction N-terminal L-lysyl-[protein] + L-leucyl-tRNA(Leu) = N-terminal L-leucyl-L-lysyl-[protein] + tRNA(Leu) + H(+). It carries out the reaction N-terminal L-arginyl-[protein] + L-leucyl-tRNA(Leu) = N-terminal L-leucyl-L-arginyl-[protein] + tRNA(Leu) + H(+). The enzyme catalyses L-phenylalanyl-tRNA(Phe) + an N-terminal L-alpha-aminoacyl-[protein] = an N-terminal L-phenylalanyl-L-alpha-aminoacyl-[protein] + tRNA(Phe). Its function is as follows. Functions in the N-end rule pathway of protein degradation where it conjugates Leu, Phe and, less efficiently, Met from aminoacyl-tRNAs to the N-termini of proteins containing an N-terminal arginine or lysine. The chain is Leucyl/phenylalanyl-tRNA--protein transferase from Shewanella woodyi (strain ATCC 51908 / MS32).